The primary structure comprises 143 residues: Actin-depolymerizing factor (143 aa).

In terms of domain architecture, ADF-H spans 11–143 (GMGVADHSKN…DLEVLRERAH (133 aa)).

This sequence belongs to the actin-binding proteins ADF family.

Its function is as follows. Actin-depolymerizing protein. Severs actin filaments (F-actin) and binds to actin monomers. The chain is Actin-depolymerizing factor from Vitis vinifera (Grape).